The sequence spans 82 residues: MTRGNQRDLAREKNQKKLADQKKRQGASGQDGNAGLSMDARMNRDADVMRIKQEKAAAKKEAEAAAAAANAKKVAKVDPLKM.

Positions 1 to 23 (MTRGNQRDLAREKNQKKLADQKK) are enriched in basic and acidic residues. 2 disordered regions span residues 1-41 (MTRG…MDAR) and 63-82 (EAAA…PLKM).

Belongs to the SERF family.

Its subcellular location is the cytoplasm. It is found in the cytosol. It localises to the nucleus. In terms of biological role, positive regulator of protein aggregation and age-related proteotoxicity. Induces conformational changes in aggregation-prone proteins, driving them into compact formations preceding the formation of aggregates. The polypeptide is Modifier of protein aggregation 4 (Caenorhabditis elegans).